A 145-amino-acid chain; its full sequence is Superoxide dismutase [Cu-Zn] (145 aa).

The Cu cation site is built by H37, H39, and H54. C48 and C137 are disulfide-bonded. Positions 54, 62, 71, and 74 each coordinate Zn(2+). Residue H111 participates in Cu cation binding.

This sequence belongs to the Cu-Zn superoxide dismutase family. Homodimer. Cu cation serves as cofactor. Requires Zn(2+) as cofactor.

The protein localises to the cytoplasm. The catalysed reaction is 2 superoxide + 2 H(+) = H2O2 + O2. Destroys radicals which are normally produced within the cells and which are toxic to biological systems. The polypeptide is Superoxide dismutase [Cu-Zn] (Drosophila busckii (Fruit fly)).